A 520-amino-acid polypeptide reads, in one-letter code: Basal body-orientation factor 1 (520 aa).

The span at 1-21 shows a compositional bias: basic residues; sequence MPKKKGKGKGKGKGKGKGKKD. Residues 1–34 form a disordered region; that stretch reads MPKKKGKGKGKGKGKGKGKKDGKHDSKADRESEI. The span at 22–34 shows a compositional bias: basic and acidic residues; the sequence is GKHDSKADRESEI. 2 coiled-coil regions span residues 27–175 and 245–386; these read KADR…REKM and VKEA…RQEA. Residues 468–492 are disordered; it reads AHPPALSASSSEKIQVSSDAGSTVE. Positions 469–478 are enriched in low complexity; it reads HPPALSASSS. Residues 479–492 are compositionally biased toward polar residues; that stretch reads EKIQVSSDAGSTVE.

It belongs to the BBOF1 family.

Its subcellular location is the cytoplasm. It is found in the cytoskeleton. The protein localises to the cilium basal body. Basal body protein required in multiciliate cells to align and maintain cilia orientation in response to flow. May act by mediating a maturation step that stabilizes and aligns cilia orientation. Not required to respond to planar cell polarity (PCP) or flow-based orientation cues. This is Basal body-orientation factor 1 from Danio rerio (Zebrafish).